We begin with the raw amino-acid sequence, 404 residues long: Argininosuccinate synthase (404 aa).

Residues 13-21 (AYSGGLDTS) and A41 contribute to the ATP site. Positions 93 and 98 each coordinate L-citrulline. Residue G123 coordinates ATP. Positions 125, 129, and 130 each coordinate L-aspartate. An L-citrulline-binding site is contributed by N129. Positions 133, 182, 191, 267, and 279 each coordinate L-citrulline.

Belongs to the argininosuccinate synthase family. Type 1 subfamily. Homotetramer.

It localises to the cytoplasm. It carries out the reaction L-citrulline + L-aspartate + ATP = 2-(N(omega)-L-arginino)succinate + AMP + diphosphate + H(+). The protein operates within amino-acid biosynthesis; L-arginine biosynthesis; L-arginine from L-ornithine and carbamoyl phosphate: step 2/3. This Moritella profunda protein is Argininosuccinate synthase.